Here is a 100-residue protein sequence, read N- to C-terminus: Signal recognition particle 19 kDa protein (100 aa).

The protein belongs to the SRP19 family. As to quaternary structure, part of the signal recognition particle protein translocation system, which is composed of SRP and FtsY. Archaeal SRP consists of a 7S RNA molecule of 300 nucleotides and two protein subunits: SRP54 and SRP19.

Its subcellular location is the cytoplasm. Functionally, involved in targeting and insertion of nascent membrane proteins into the cytoplasmic membrane. Binds directly to 7S RNA and mediates binding of the 54 kDa subunit of the SRP. The protein is Signal recognition particle 19 kDa protein of Pyrococcus furiosus (strain ATCC 43587 / DSM 3638 / JCM 8422 / Vc1).